A 276-amino-acid polypeptide reads, in one-letter code: ADP-dependent (S)-NAD(P)H-hydrate dehydratase (276 aa).

The YjeF C-terminal domain occupies Thr-5–Phe-269. Ala-40, Gly-103, and His-152 together coordinate (6S)-NADPHX. Gly-211 provides a ligand contact to AMP. Asp-212 serves as a coordination point for (6S)-NADPHX.

This sequence belongs to the NnrD/CARKD family. As to quaternary structure, homotetramer. Mg(2+) serves as cofactor.

The catalysed reaction is (6S)-NADHX + ADP = AMP + phosphate + NADH + H(+). It carries out the reaction (6S)-NADPHX + ADP = AMP + phosphate + NADPH + H(+). Catalyzes the dehydration of the S-form of NAD(P)HX at the expense of ADP, which is converted to AMP. Together with NAD(P)HX epimerase, which catalyzes the epimerization of the S- and R-forms, the enzyme allows the repair of both epimers of NAD(P)HX, a damaged form of NAD(P)H that is a result of enzymatic or heat-dependent hydration. The polypeptide is ADP-dependent (S)-NAD(P)H-hydrate dehydratase (Listeria monocytogenes serovar 1/2a (strain ATCC BAA-679 / EGD-e)).